The chain runs to 309 residues: Protein MAK16 homolog (309 aa).

Positions 194-309 (EADQFSEEEA…IEEETENQAN (116 aa)) are disordered. Composition is skewed to acidic residues over residues 195-227 (ADQF…DIED) and 235-270 (VEGD…DDEE). A compositionally biased stretch (basic residues) spans 275–293 (ITKKRGPTFKPTKKTPQKR). The segment covering 299–309 (EIEEETENQAN) has biased composition (acidic residues).

Belongs to the MAK16 family.

The protein resides in the nucleus. It localises to the nucleolus. This chain is Protein MAK16 homolog (mak16l), found in Dictyostelium discoideum (Social amoeba).